We begin with the raw amino-acid sequence, 691 residues long: MARSPVEPPASQPAKRAAWLRAELERANYAYYVLDQPDLPDAEYDRLFVELQRIEAEHPDLVTPDSPTQRVGGEAASGFTPVVHDKPMLSLNNGFADEDVIAFDKRVADGLDKATDLAGTVTEPVEYACELKFDGLAISLRYENGRFVQASTRGDGTTGEDVTENIRTIRAIPLTLKGKRIPRMLDVRGEVLMFKRDFARLNERQRAAGQREFANPRNAAAGSLRQLDSKITASRPLSFFAYGIGVLDGADMPDTHSGLLDWYETLGLPVNRERAVVRGAAGLLAFFHSVGERRESLPYDIDGVVYKVNRRDEQDRLGFVSRAPRFALAHKFPAQEALTKLIAIDVQVGRTGAITPVARLEPVFVGGATVTNATLHNEDEVRRKDIRIGDTVIVRRAGDVIPEVVSAVLDRRPADAQEFVMPTECPECGSRIERLPDEAIARCTGGLFCPAQRKQALWHFAQRRALDIDGLGEKIIDQLVEQNLVRTPADLFNLGFSTLVALDRFAEKSARNLIDSLEKAKHTTLARFIYALGIRHVGESTAKDLAKHFGSLDPIMHAPIDALLEVNDVGPIVAESIHQFFAEEHNRTVIEQLRARGKVTWPEGPPAPRAPQGVLAGKTVVLTGTLPTLTREAAKEMLEAAGAKVAGSVSKKTDYVVAGADAGSKLAKAEELGIPVLDEAGMHTLLEGHAR.

Residues 41-45, 90-91, and E130 contribute to the NAD(+) site; these read DAEYD and SL. K132 (N6-AMP-lysine intermediate) is an active-site residue. 4 residues coordinate NAD(+): R153, E190, K307, and K331. C425, C428, C443, and C449 together coordinate Zn(2+). A BRCT domain is found at 610 to 691; it reads APQGVLAGKT…MHTLLEGHAR (82 aa).

This sequence belongs to the NAD-dependent DNA ligase family. LigA subfamily. Mg(2+) serves as cofactor. It depends on Mn(2+) as a cofactor.

The catalysed reaction is NAD(+) + (deoxyribonucleotide)n-3'-hydroxyl + 5'-phospho-(deoxyribonucleotide)m = (deoxyribonucleotide)n+m + AMP + beta-nicotinamide D-nucleotide.. Functionally, DNA ligase that catalyzes the formation of phosphodiester linkages between 5'-phosphoryl and 3'-hydroxyl groups in double-stranded DNA using NAD as a coenzyme and as the energy source for the reaction. It is essential for DNA replication and repair of damaged DNA. This is DNA ligase from Burkholderia pseudomallei (strain 1710b).